The sequence spans 145 residues: Large ribosomal subunit protein uL13 (145 aa).

This sequence belongs to the universal ribosomal protein uL13 family. Part of the 50S ribosomal subunit.

In terms of biological role, this protein is one of the early assembly proteins of the 50S ribosomal subunit, although it is not seen to bind rRNA by itself. It is important during the early stages of 50S assembly. The sequence is that of Large ribosomal subunit protein uL13 from Geobacillus kaustophilus (strain HTA426).